Reading from the N-terminus, the 210-residue chain is Ribosomal RNA large subunit methyltransferase E (210 aa).

G61, W63, D81, D97, and D122 together coordinate S-adenosyl-L-methionine. K162 (proton acceptor) is an active-site residue. Positions 187-196 (KPEASRKRSP) are enriched in basic and acidic residues. The segment at 187–210 (KPEASRKRSPEVYALGQGKRAHMK) is disordered.

Belongs to the class I-like SAM-binding methyltransferase superfamily. RNA methyltransferase RlmE family.

The protein resides in the cytoplasm. It carries out the reaction uridine(2552) in 23S rRNA + S-adenosyl-L-methionine = 2'-O-methyluridine(2552) in 23S rRNA + S-adenosyl-L-homocysteine + H(+). In terms of biological role, specifically methylates the uridine in position 2552 of 23S rRNA at the 2'-O position of the ribose in the fully assembled 50S ribosomal subunit. The sequence is that of Ribosomal RNA large subunit methyltransferase E from Stenotrophomonas maltophilia (strain R551-3).